The following is a 296-amino-acid chain: MASKTKFRGSYTALVTPFKNGSVDEAAFRSLVSWQIGEGVHGLVPVGTTGESPTLSHDEHRKVVEWCIDEARGRVPVIAGAGSNSTREAVDLAVHAEKAGADAVLVVTPYYNKPTQEGMYHHFKTVNDAIGIPIIIYNIPSRSVVDLSVETMARLFELKNIAGVKDATANVARVSLQRHAMGPDFIQLSGEDMTALAFMAAGGHGCVSVVANVAPKLCASLMSAVLKGDYATGLAIQDRLVPLHAAIFKEPGLAGAKHGLKLLGRLDEVVRLPLLPVTPPTGKVIRDAMVHAGLLN.

Residue T49 participates in pyruvate binding. Y137 serves as the catalytic Proton donor/acceptor. Catalysis depends on K165, which acts as the Schiff-base intermediate with substrate. Residue V207 participates in pyruvate binding.

The protein belongs to the DapA family. Homotetramer; dimer of dimers.

It is found in the cytoplasm. The catalysed reaction is L-aspartate 4-semialdehyde + pyruvate = (2S,4S)-4-hydroxy-2,3,4,5-tetrahydrodipicolinate + H2O + H(+). It functions in the pathway amino-acid biosynthesis; L-lysine biosynthesis via DAP pathway; (S)-tetrahydrodipicolinate from L-aspartate: step 3/4. Catalyzes the condensation of (S)-aspartate-beta-semialdehyde [(S)-ASA] and pyruvate to 4-hydroxy-tetrahydrodipicolinate (HTPA). This is 4-hydroxy-tetrahydrodipicolinate synthase from Nitrobacter hamburgensis (strain DSM 10229 / NCIMB 13809 / X14).